A 221-amino-acid chain; its full sequence is MSQTCQTGYAYMQPFVQIIPSNLSLACGLRILRAEDYQSSLTTEELISAAKQDAEKILADAQEVYEQQKQLGWQAGMDEARTLQATLIHETQLQCQQFYRHVEQQMSEVVLLAVRKILNDYDQVAMTLQVVREALALVSNQKQVVVRVNPDQAGAIREQIAKVHKDFPEISYLEVTADARLDQGGCILETEVGIIDASIDGQIEALSRAISTTLGQMKVTE.

This sequence belongs to the SctL stator family. The core secretion machinery of the T3SS is composed of approximately 20 different proteins, including cytoplasmic components, a base, an export apparatus and a needle. This subunit is part of the cytosolic complex. Interacts directly with YscN/SctN (T3SS ATPase) and YscQ/SctQ (the major sorting platform component).

It localises to the cytoplasm. Component of the type III secretion system (T3SS), also called injectisome, which is used to inject bacterial effector proteins into eukaryotic host cells. Acts as a regulator of the YscN/SctN ATPase activity. The sequence is that of Type 3 secretion system stator protein from Yersinia pestis.